The sequence spans 455 residues: tRNA-2-methylthio-N(6)-dimethylallyladenosine synthase (455 aa).

The 121-residue stretch at 10–130 folds into the MTTase N-terminal domain; that stretch reads RKVFIKTYGC…LPDALKRVRR (121 aa). 6 residues coordinate [4Fe-4S] cluster: Cys19, Cys55, Cys93, Cys171, Cys175, and Cys178. Positions 157 to 389 constitute a Radical SAM core domain; it reads RSRGVTAFLT…QALLLRQQKE (233 aa). Positions 392-454 constitute a TRAM domain; the sequence is ESLVGKTMDV…PNSLFAEVAG (63 aa).

Belongs to the methylthiotransferase family. MiaB subfamily. In terms of assembly, monomer. [4Fe-4S] cluster serves as cofactor.

It is found in the cytoplasm. It carries out the reaction N(6)-dimethylallyladenosine(37) in tRNA + (sulfur carrier)-SH + AH2 + 2 S-adenosyl-L-methionine = 2-methylsulfanyl-N(6)-dimethylallyladenosine(37) in tRNA + (sulfur carrier)-H + 5'-deoxyadenosine + L-methionine + A + S-adenosyl-L-homocysteine + 2 H(+). In terms of biological role, catalyzes the methylthiolation of N6-(dimethylallyl)adenosine (i(6)A), leading to the formation of 2-methylthio-N6-(dimethylallyl)adenosine (ms(2)i(6)A) at position 37 in tRNAs that read codons beginning with uridine. The protein is tRNA-2-methylthio-N(6)-dimethylallyladenosine synthase of Agrobacterium fabrum (strain C58 / ATCC 33970) (Agrobacterium tumefaciens (strain C58)).